The following is a 93-amino-acid chain: Small ribosomal subunit protein uS19 (93 aa).

It belongs to the universal ribosomal protein uS19 family.

In terms of biological role, protein S19 forms a complex with S13 that binds strongly to the 16S ribosomal RNA. The chain is Small ribosomal subunit protein uS19 from Dehalococcoides mccartyi (strain ATCC BAA-2100 / JCM 16839 / KCTC 5957 / BAV1).